We begin with the raw amino-acid sequence, 359 residues long: DNA integrity scanning protein DisA (359 aa).

The 139-residue stretch at E10–I148 folds into the DAC domain. Residues G77, L95, and M108–T112 contribute to the ATP site.

This sequence belongs to the DisA family. Homooctamer. Requires Mg(2+) as cofactor.

The catalysed reaction is 2 ATP = 3',3'-c-di-AMP + 2 diphosphate. Participates in a DNA-damage check-point that is active prior to asymmetric division when DNA is damaged. DisA forms globular foci that rapidly scan along the chromosomes during sporulation, searching for lesions. When a lesion is present, DisA pauses at the lesion site. This triggers a cellular response that culminates in a temporary block in sporulation initiation. Its function is as follows. Also has diadenylate cyclase activity, catalyzing the condensation of 2 ATP molecules into cyclic di-AMP (c-di-AMP). c-di-AMP acts as a signaling molecule that couples DNA integrity with progression of sporulation. The rise in c-di-AMP level generated by DisA while scanning the chromosome, operates as a positive signal that advances sporulation; upon encountering a lesion, the DisA focus arrests at the damaged site and halts c-di-AMP synthesis. The sequence is that of DNA integrity scanning protein DisA from Bacillus pumilus (strain SAFR-032).